We begin with the raw amino-acid sequence, 100 residues long: Insertion element IS600 uncharacterized 11 kDa protein (100 aa).

It belongs to the transposase 8 family.

This Shigella sonnei protein is Insertion element IS600 uncharacterized 11 kDa protein.